The chain runs to 424 residues: MTSSNLIKQLQERGLVAQVTDEDALAERLAQGPISLYCGFDPTADSLHLGHLVPLLCLKRFQLAGHRPVALVGGATGMIGDPSFKASERKLNTEDTVNEWVEKIRRQVSPFLDFDCGDNSAIAANNYDWFGGMNVLTFLRDIGKHFSVNQMINKEAVKQRLNRDDSGISFTEFSYNLLQAYDFACLNKAHGVALQIGGSDQWGNITSGIDLTRRLHQQQVYGLTVPLITKADGTKFGKTEGGAVWLDPKKTSPYKFYQFWINTADADVYRFLKFFTFMNLEEINALEEEDKNSGKAPRAQYVLAENVTGMVHGEEGLAAAKRITASLFSGDLNDMTEADFAQLAQDGMPTIELTRDADLQQALVNAELVPSRGQARTMISSNAVAINGEKQSDPEYAFTDADRLFGRYTLLRRGKKHYCLISWL.

L-tyrosine is bound at residue Y37. The 'HIGH' region signature appears at 42-51 (PTADSLHLGH). Residues Y175 and Q179 each contribute to the L-tyrosine site. Residues 235 to 239 (KFGKT) carry the 'KMSKS' region motif. Residue K238 coordinates ATP. The region spanning 357 to 414 (ADLQQALVNAELVPSRGQARTMISSNAVAINGEKQSDPEYAFTDADRLFGRYTLLRRG) is the S4 RNA-binding domain.

Belongs to the class-I aminoacyl-tRNA synthetase family. TyrS type 1 subfamily. As to quaternary structure, homodimer.

It is found in the cytoplasm. The enzyme catalyses tRNA(Tyr) + L-tyrosine + ATP = L-tyrosyl-tRNA(Tyr) + AMP + diphosphate + H(+). Functionally, catalyzes the attachment of tyrosine to tRNA(Tyr) in a two-step reaction: tyrosine is first activated by ATP to form Tyr-AMP and then transferred to the acceptor end of tRNA(Tyr). The chain is Tyrosine--tRNA ligase from Yersinia enterocolitica serotype O:8 / biotype 1B (strain NCTC 13174 / 8081).